The following is a 98-amino-acid chain: NADH-ubiquinone oxidoreductase chain 4L (98 aa).

A run of 3 helical transmembrane segments spans residues 1 to 21, 25 to 45, and 57 to 79; these read MLAI…GVLV, HLMS…ILMT, and SMAP…ALLV.

This sequence belongs to the complex I subunit 4L family. Core subunit of respiratory chain NADH dehydrogenase (Complex I) which is composed of 45 different subunits.

It localises to the mitochondrion inner membrane. The enzyme catalyses a ubiquinone + NADH + 5 H(+)(in) = a ubiquinol + NAD(+) + 4 H(+)(out). Core subunit of the mitochondrial membrane respiratory chain NADH dehydrogenase (Complex I) which catalyzes electron transfer from NADH through the respiratory chain, using ubiquinone as an electron acceptor. Part of the enzyme membrane arm which is embedded in the lipid bilayer and involved in proton translocation. The sequence is that of NADH-ubiquinone oxidoreductase chain 4L (MT-ND4L) from Dasyurus hallucatus (Northern quoll).